Consider the following 631-residue polypeptide: Probable protein phosphatase 2C 31 (631 aa).

Disordered stretches follow at residues 119–142 (GPLH…SDRF) and 205–231 (LSGR…PKGN). Residues 131 to 140 (ASGSASTASD) show a composition bias toward polar residues. One can recognise a PPM-type phosphatase domain in the interval 221–622 (DGDYRSTPKG…DDVSIIVMSF (402 aa)). Mn(2+)-binding residues include D261 and G262. A disordered region spans residues 324-347 (GGDDDPDAERKAKRGRIERNADDD). Mn(2+) contacts are provided by D550 and D613.

It belongs to the PP2C family. Mg(2+) serves as cofactor. Requires Mn(2+) as cofactor.

The enzyme catalyses O-phospho-L-seryl-[protein] + H2O = L-seryl-[protein] + phosphate. It carries out the reaction O-phospho-L-threonyl-[protein] + H2O = L-threonyl-[protein] + phosphate. The protein is Probable protein phosphatase 2C 31 of Oryza sativa subsp. japonica (Rice).